Here is an 841-residue protein sequence, read N- to C-terminus: Follistatin-related protein 4 (841 aa).

The N-terminal stretch at 1-22 (MKPGGFWPHLALLGVSLPAVLG) is a signal peptide. A disordered region spans residues 29–54 (SRSPNMVPGESQAEETRGFEVTRREG). Basic and acidic residues predominate over residues 42 to 54 (EETRGFEVTRREG). Positions 80 to 134 (TTGQPSCQCLEVCRPRYMPVCGSDGRLYGNHCELRRAACLLGKRIVSVHSKDCFL) constitute a Kazal-like domain. 3 cysteine pairs are disulfide-bonded: Cys-86/Cys-118, Cys-92/Cys-111, and Cys-100/Cys-132. EF-hand domains are found at residues 173–208 (QKRL…EQDM) and 225–247 (DYNS…IQLS). The Ca(2+) site is built by Asp-186, Asp-188, Asn-190, His-192, Glu-197, Asp-225, Asn-227, Asp-229, Ser-231, and Glu-236. 2 consecutive Ig-like domains span residues 250–336 (PEDK…VLQV) and 340–425 (PVIR…EDIS). 2 disulfide bridges follow: Cys-269–Cys-320 and Cys-361–Cys-412. Residue Asn-317 is glycosylated (N-linked (GlcNAc...) asparagine).

The protein resides in the secreted. The chain is Follistatin-related protein 4 (Fstl4) from Mus musculus (Mouse).